The following is a 311-amino-acid chain: Probable manganese-dependent inorganic pyrophosphatase (311 aa).

The Mn(2+) site is built by His9, Asp13, Asp15, Asp75, His97, and Asp149.

The protein belongs to the PPase class C family. Mn(2+) is required as a cofactor.

Its subcellular location is the cytoplasm. It catalyses the reaction diphosphate + H2O = 2 phosphate + H(+). This is Probable manganese-dependent inorganic pyrophosphatase from Lactobacillus delbrueckii subsp. bulgaricus (strain ATCC BAA-365 / Lb-18).